The following is a 246-amino-acid chain: 2-aminoethylphosphonate cytidylyltransferase (246 aa).

Positions 19, 20, 34, 97, 114, and 115 each coordinate CMP-(2-aminoethyl)phosphonate. Mg(2+) is bound by residues D116 and D145. D145, K161, and D202 together coordinate CMP-(2-aminoethyl)phosphonate. Positions 226 and 228 each coordinate Mg(2+).

Belongs to the LicC/PntC cytidylyltransferase family. In terms of assembly, monomer. Mg(2+) is required as a cofactor.

It carries out the reaction (2-aminoethyl)phosphonate + CTP = CMP-(2-aminoethyl)phosphonate + diphosphate. Its pathway is phosphorus metabolism; phosphonate biosynthesis. In terms of biological role, cytidylyltransferase involved in the biosynthesis of cell-surface phosphonates. Catalyzes the activation of 2-aminoethylphosphonate (AEP) to CMP-2-aminoethylphosphonate (CMP-AEP). Can also use phosphocholine, with much lower efficiency. Exhibits strong activity towards CTP, limited activity towards ATP and no activity with GTP. The protein is 2-aminoethylphosphonate cytidylyltransferase of Lancefieldella rimae (strain ATCC 49626 / DSM 7090 / CCUG 31168 / NBRC 15546 / VPI D140H-11A) (Atopobium rimae).